A 3163-amino-acid polypeptide reads, in one-letter code: Genome polyprotein (3163 aa).

A Peptidase S30 domain is found at 219 to 362; sequence KMSDQGVDML…KTMSLKIVHF (144 aa). Active-site for P1 proteinase activity residues include His-270, Asp-279, and Ser-313. Residues 414–417 carry the Involved in interaction with stylet and aphid transmission motif; it reads KITC. The Involved in virions binding and aphid transmission signature appears at 672–674; the sequence is PTK. One can recognise a Peptidase C6 domain in the interval 698–820; sequence MYIAKEGYCY…ESSLKHYRVG (123 aa). Residues Cys-706 and His-779 each act as for helper component proteinase activity in the active site. Residues 1300 to 1452 enclose the Helicase ATP-binding domain; that stretch reads KIAHESDKDI…TQYPVSISTE (153 aa). 1313-1320 is an ATP binding site; that stretch reads GAVGSGKS. The short motif at 1402-1405 is the DEAH box element; the sequence is DECH. One can recognise a Helicase C-terminal domain in the interval 1471 to 1630; the sequence is DVISKGDNIL…GLPVITNNVS (160 aa). The Cytoplasmic segment spans residues 1871-1888; it reads STNEMSKFLQLKGKWNKT. The helical transmembrane segment at 1889-1909 threads the bilayer; the sequence is LITRDVLVICGVLGGGVWMVV. Residues 1910–1923 are Lumenal-facing; that stretch reads QHFRSKVSEPVTHE. Positions 1964-1971 match the Nuclear localization signal motif; it reads KKGKSKGR. A binding to host eIF(iso)4E region spans residues 1983–2017; it reads INMYGFDPEDFSAVRFVDPLTGATLDDNPFTDITL. Tyr-1986 carries the post-translational modification O-(5'-phospho-RNA)-tyrosine. One can recognise a Peptidase C4 domain in the interval 2116–2334; it reads SNSMFRGLRD…ISWGSLNIQA (219 aa). Residues His-2161, Asp-2196, and Cys-2266 each act as for nuclear inclusion protein A activity in the active site. Residues 2600 to 2724 enclose the RdRp catalytic domain; the sequence is WVYCDADGSQ…SVHPEYEYIL (125 aa). Positions 2883–2934 are disordered; the sequence is DLTEEQKQAEKEKKEREKAEKERERQKQLAFKKGKDVAQEEGKRDKEVNAGT. The span at 2886 to 2930 shows a compositional bias: basic and acidic residues; the sequence is EEQKQAEKEKKEREKAEKERERQKQLAFKKGKDVAQEEGKRDKEV.

It belongs to the potyviridae genome polyprotein family. As to quaternary structure, interacts with host eIF4E protein (via cap-binding region); this interaction mediates the translation of the VPg-viral RNA conjugates. Part of a complex that comprises VPg, RNA, host EIF4E and EIF4G; this interaction mediates the translation of the VPg-viral RNA conjugates. Interacts, via N-terminal region, with host Sec24a protein in COPII-coated vesicles. This binding triggers the formation of host endoplasmic reticulum (ER)-derived viral vesicles involved in cell-to-cell viral movement. In terms of processing, VPg is uridylylated by the polymerase and is covalently attached to the 5'-end of the genomic RNA. This uridylylated form acts as a nucleotide-peptide primer for the polymerase. Potyviral RNA is expressed as two polyproteins which undergo post-translational proteolytic processing. Genome polyprotein is processed by NIa-pro, P1 and HC-pro proteinases resulting in the production of at least ten individual proteins. P3N-PIPO polyprotein is cleaved by P1 and HC-pro proteinases resulting in the production of three individual proteins. The P1 proteinase and the HC-pro cleave only their respective C-termini autocatalytically. 6K1 is essential for proper proteolytic separation of P3 from CI.

Its subcellular location is the host cytoplasm. It is found in the host nucleus. The protein resides in the host cytoplasmic vesicle. It localises to the host membrane. The protein localises to the virion. The catalysed reaction is RNA(n) + a ribonucleoside 5'-triphosphate = RNA(n+1) + diphosphate. The enzyme catalyses Hydrolyzes glutaminyl bonds, and activity is further restricted by preferences for the amino acids in P6 - P1' that vary with the species of potyvirus, e.g. Glu-Xaa-Xaa-Tyr-Xaa-Gln-|-(Ser or Gly) for the enzyme from tobacco etch virus. The natural substrate is the viral polyprotein, but other proteins and oligopeptides containing the appropriate consensus sequence are also cleaved.. It catalyses the reaction Hydrolyzes a Gly-|-Gly bond at its own C-terminus, commonly in the sequence -Tyr-Xaa-Val-Gly-|-Gly, in the processing of the potyviral polyprotein.. Functionally, cysteine protease that cleaves a Gly-Gly dipeptide at its own C-terminus. Required for aphid transmission and also has proteolytic activity. Interacts with virions and aphid stylets. Acts as a suppressor of RNA-mediated gene silencing, also known as post-transcriptional gene silencing (PTGS), a mechanism of plant viral defense that limits the accumulation of viral RNAs. May have RNA-binding activity. In terms of biological role, has helicase activity. It may be involved in replication. Its function is as follows. Indispensable for virus replication. Responsible for the formation of peripheral motile host endoplasmic reticulum (ER)-derived viral vesicles called 'viral factories', seat of the viral RNA (vRNA) replication and carrying vRNA to plasmodesmata for delivery into adjacent non-infected cells; this process relies on host Sec24a-binding. Functionally, mediates the cap-independent, EIF4E-dependent translation of viral genomic RNAs. Binds to the cap-binding site of host EIF4E and thus interferes with the host EIF4E-dependent mRNA export and translation. VPg-RNA directly binds EIF4E and is a template for transcription. Also forms trimeric complexes with EIF4E-EIF4G, which are templates for translation. In terms of biological role, has RNA-binding and proteolytic activities. Its function is as follows. RNA-dependent RNA polymerase that ensures transcription and replication of viral RNA (vRNA). Involved in aphid transmission, cell-to-cell and systemis movement, encapsidation of the viral RNA and in the regulation of viral RNA amplification. The protein is Genome polyprotein of Brassica (TuMV).